Consider the following 250-residue polypeptide: 5-oxoprolinase subunit A (250 aa).

This sequence belongs to the LamB/PxpA family. In terms of assembly, forms a complex composed of PxpA, PxpB and PxpC.

The enzyme catalyses 5-oxo-L-proline + ATP + 2 H2O = L-glutamate + ADP + phosphate + H(+). Functionally, catalyzes the cleavage of 5-oxoproline to form L-glutamate coupled to the hydrolysis of ATP to ADP and inorganic phosphate. The chain is 5-oxoprolinase subunit A from Paraburkholderia phytofirmans (strain DSM 17436 / LMG 22146 / PsJN) (Burkholderia phytofirmans).